The following is a 658-amino-acid chain: DNA mismatch repair protein MutL (658 aa).

Over residues 114–130 (RQEDSSHATQVKAEDGK) the composition is skewed to basic and acidic residues. Disordered regions lie at residues 114–137 (RQEDSSHATQVKAEDGKLSSPTAA), 369–401 (DYPTGNKPDTRNAFGSSGKTAPMPYQSAYAPQQ), and 438–457 (FGNMPSETPAPKTDTPLSDG).

The protein belongs to the DNA mismatch repair MutL/HexB family.

This protein is involved in the repair of mismatches in DNA. It is required for dam-dependent methyl-directed DNA mismatch repair. May act as a 'molecular matchmaker', a protein that promotes the formation of a stable complex between two or more DNA-binding proteins in an ATP-dependent manner without itself being part of a final effector complex. The chain is DNA mismatch repair protein MutL from Neisseria meningitidis serogroup A / serotype 4A (strain DSM 15465 / Z2491).